Consider the following 510-residue polypeptide: MEIRADEISRIIREQIKDYGKKVEVAETGSILSQADGVARIYGLAGAAAGELLEFPGGVRGLVLNLEEDNVGAAIMGPYEHIREGDPVKRTGLIAEVPVGEELLGRVVDGLGNPIDGRGPLNAKHHRKIEIKAPGIVKRKSVHEPMQTGLKAIDALVPIGRGQRELILGDRQTGKTAVAIDTILNNKGNNLYCFYVAIGQKQSTVARVVDTLKKYGAMEYTTVISASASDPAPMQYLAPYTGVTMAEYFRDSGRHALIIYDDLSKQAVAYRQLSLLLRRPPGREAYPGDVFYLHSRLLERAAKLSDKEGAGSLTALPIIETQAGDVSAYIPTNVISITDGQIFLESNLFYQGVRPAINVGISVSRVGGSAQIKAMKQVAGSLKLDLAQYRELAAFAQFGSDLDKATQETLARGERLVELLKQGQYAPLPVEKQVIQIYAGTQKDTDGQNWIRAVPTEQVVRYMRELIEFLDARHPGIAKAIAEKKALDDGIRKDLDAALREFAGIFKIEG.

169–176 (GDRQTGKT) lines the ATP pocket.

It belongs to the ATPase alpha/beta chains family. As to quaternary structure, F-type ATPases have 2 components, CF(1) - the catalytic core - and CF(0) - the membrane proton channel. CF(1) has five subunits: alpha(3), beta(3), gamma(1), delta(1), epsilon(1). CF(0) has three main subunits: a(1), b(2) and c(9-12). The alpha and beta chains form an alternating ring which encloses part of the gamma chain. CF(1) is attached to CF(0) by a central stalk formed by the gamma and epsilon chains, while a peripheral stalk is formed by the delta and b chains.

It localises to the cell inner membrane. The catalysed reaction is ATP + H2O + 4 H(+)(in) = ADP + phosphate + 5 H(+)(out). Functionally, produces ATP from ADP in the presence of a proton gradient across the membrane. The alpha chain is a regulatory subunit. This chain is ATP synthase subunit alpha, found in Anaeromyxobacter sp. (strain K).